Consider the following 346-residue polypeptide: 3 beta-hydroxysteroid dehydrogenase/Delta 5--&gt;4-isomerase (346 aa).

The active-site Proton acceptor is Y147. K151 contributes to the NAD(+) binding site.

This sequence belongs to the 3-beta-HSD family.

It carries out the reaction a 3beta-hydroxy-Delta(5)-steroid + NAD(+) = a 3-oxo-Delta(5)-steroid + NADH + H(+). The enzyme catalyses a 3-oxo-Delta(5)-steroid = a 3-oxo-Delta(4)-steroid. The protein operates within lipid metabolism; steroid biosynthesis. In terms of biological role, catalyzes the oxidative conversion of Delta(5)-ene-3-beta-hydroxy steroid, and the oxidative conversion of ketosteroids. The 3-beta-HSD enzymatic system plays a crucial role in the biosynthesis of all classes of hormonal steroids. During viral infection, steroid production contributes to virulence by inhibiting the host inflammatory response. The chain is 3 beta-hydroxysteroid dehydrogenase/Delta 5--&gt;4-isomerase (OPG174) from Homo sapiens (Human).